The following is a 108-amino-acid chain: uncharacterized protein (108 aa).

An HTH hxlR-type domain is found at 7-106 (CPRFEKAVDI…WATEWIDPSF (100 aa)).

This is an uncharacterized protein from Bacillus subtilis (strain 168).